Here is a 151-residue protein sequence, read N- to C-terminus: Lipoprotein signal peptidase (151 aa).

Helical transmembrane passes span 54–74 (GQMW…IYLI) and 83–103 (LLKI…IDRL). Residues aspartate 110 and aspartate 125 contribute to the active site. A helical transmembrane segment spans residues 120–140 (IFNIADSALTIGVGLFLLNIL).

This sequence belongs to the peptidase A8 family.

The protein resides in the cell membrane. The catalysed reaction is Release of signal peptides from bacterial membrane prolipoproteins. Hydrolyzes -Xaa-Yaa-Zaa-|-(S,diacylglyceryl)Cys-, in which Xaa is hydrophobic (preferably Leu), and Yaa (Ala or Ser) and Zaa (Gly or Ala) have small, neutral side chains.. It functions in the pathway protein modification; lipoprotein biosynthesis (signal peptide cleavage). In terms of biological role, this protein specifically catalyzes the removal of signal peptides from prolipoproteins. This chain is Lipoprotein signal peptidase, found in Shouchella clausii (strain KSM-K16) (Alkalihalobacillus clausii).